The chain runs to 92 residues: Transcription factor PRE5 (92 aa).

Positions 4 to 59 (RRSRQTSNASRISDDQMIDLVSKLRQFLPEIHERRRSDKVSASKVLQETCNYIRKL) constitute a bHLH domain.

This sequence belongs to the bHLH protein family. Interacts with IBH1.

It localises to the nucleus. Functionally, atypical and probable non DNA-binding bHLH transcription factor that integrates multiple signaling pathways to regulate cell elongation and plant development. May have a regulatory role in various aspects of gibberellin-dependent growth and development. The polypeptide is Transcription factor PRE5 (PRE5) (Arabidopsis thaliana (Mouse-ear cress)).